Reading from the N-terminus, the 308-residue chain is Taste receptor type 2 member 46 (308 aa).

M1 is a topological domain (extracellular). The chain crosses the membrane as a helical span at residues 2 to 22 (ITFLSITFSILVGVIFVIGNF). The Cytoplasmic portion of the chain corresponds to 23–46 (ANGFIALVNSIEWVKRQKISFADQ). A helical transmembrane segment spans residues 47 to 67 (ILTGLAVSRVGLLWVLLLHLY). At 68–86 (ATEFNLAFYSVEVRITAYN) the chain is on the extracellular side. Residues 87–107 (VWIVTNHFSNWLSTSLSMFYL) form a helical membrane-spanning segment. Over 108–126 (LKIATFSNLIFLHLKRKVK) the chain is Cytoplasmic. The chain crosses the membrane as a helical span at residues 127–147 (SVILVTLLGPLLFLVCHLFVM). Over 148–178 (NMNHIVWRKEYEGNITWRIKLRSAMYLSNVT) the chain is Extracellular. N-linked (GlcNAc...) asparagine glycans are attached at residues N161 and N176. Residues 179–199 (VTMLANLIPLTLTLMSFLLLI) form a helical membrane-spanning segment. The Cytoplasmic portion of the chain corresponds to 200-229 (CSLCKHLKKMQVHGKGSQDPSTKVHIKALQ). Residues 230 to 250 (TVTSFLLLCAIYFLSMILSVW) traverse the membrane as a helical segment. At 251–258 (NFELEKKP) the chain is on the extracellular side. The chain crosses the membrane as a helical span at residues 259–279 (VFMFCQAVIFSYPSTHPLILI). Topologically, residues 280–308 (WGNKKLKQIFLSVLWNVRYWVKGQKPSSP) are cytoplasmic.

It belongs to the G-protein coupled receptor T2R family.

The protein localises to the membrane. It is found in the cell projection. Its subcellular location is the cilium membrane. In terms of biological role, receptor that may play a role in the perception of bitterness and is gustducin-linked. May play a role in sensing the chemical composition of the gastrointestinal content. The activity of this receptor may stimulate alpha gustducin, mediate PLC-beta-2 activation and lead to the gating of TRPM5. In airway epithelial cells, binding of bitter compounds increases the intracellular calcium ion concentration and stimulates ciliary beat frequency. The polypeptide is Taste receptor type 2 member 46 (TAS2R46) (Macaca mulatta (Rhesus macaque)).